A 272-amino-acid polypeptide reads, in one-letter code: Serine/arginine-rich splicing factor 5 (272 aa).

Residues 4 to 74 enclose the RRM 1 domain; sequence CRVFIGRLNP…ERVTIEHARA (71 aa). Residues 73–105 form a disordered region; it reads RARSRGGRGRGRYSDRFSSRRPRNDRRNAPPVR. Over residues 74 to 83 the composition is skewed to basic residues; the sequence is ARSRGGRGRG. Phosphoserine is present on Ser-86. One can recognise an RRM 2 domain in the interval 108–181; it reads NRLIVENLSS…RKIKLIEGSK (74 aa). An N6-acetyllysine modification is found at Lys-167. A disordered region spans residues 174–272; sequence IKLIEGSKRH…SRSRSVDSGN (99 aa). The segment covering 182 to 229 has biased composition (basic residues); it reads RHSRSRSRSRSRTRSSSRSRSRSRSRSRKSYSRSRSRSRSRSRSKSRS. Phosphoserine is present on residues Ser-227, Ser-229, Ser-233, Ser-250, and Ser-253. The span at 242-254 shows a compositional bias: low complexity; sequence RGSSSRSKSPASV.

It belongs to the splicing factor SR family. In terms of assembly, interacts (via RS domain) with PHF5A (via N-terminus). Found in a pre-mRNA splicing complex with SRSF4/SFRS4, SRSF5/SFRS5, SNRNP70, SNRPA1, SRRM1 and SRRM2. In terms of processing, extensively phosphorylated on serine residues in the RS domain.

It localises to the nucleus. In terms of biological role, plays a role in constitutive splicing and can modulate the selection of alternative splice sites. This is Serine/arginine-rich splicing factor 5 (SRSF5) from Homo sapiens (Human).